The sequence spans 548 residues: MDSQRNLLVIALLFVSFMIWQAWEQDKNPQPQTQQTTQTTTTAAGSAADQGVPASGQGKMITVKTDVLDLTINTRGGDVEQALLPAYPKELGSNEPFQLLETTPQFIYQAQSGLTGRDGPDNPANGPRPLYNVEKEAFVLADGQNELQVPMTYTDAAGNTFTKTFVFKRGDYAVNVNYSVQNAGEKPLEVSTFGQLKQSVNLPPHRDTGSSNFALHTFRGAAYSTPDEKYEKYKFDTIADNENLNVSSKGGWVAMLQQYFATAWIPRNDGTNNFYTANLGNGIVAIGYKAQPVLVQPGQTGAMTSTLWVGPEIQDKMAAVAPHLDLTVDYGWLWFISQPLFKLLKWIHSFVGNWGFSIIIITFIVRGIMYPLTKAQYTSMAKMRMLQPKIQAMRERLGDDKQRQSQEMMALYKAEKVNPLGGCFPLIIQMPIFLALYYMLMGSIELRHAPFALWIHDLSAQDPYYILPILMGVTMFFIQKMSPTTVTDPMQQKIMTFMPVIFTVFFLWFPSGLVLYYIVSNLVTIIQQQLIYRGLEKRGLHSREKKKS.

Residues 6–26 (NLLVIALLFVSFMIWQAWEQD) form a helical membrane-spanning segment. The tract at residues 28-56 (NPQPQTQQTTQTTTTAAGSAADQGVPASG) is disordered. The span at 29–42 (PQPQTQQTTQTTTT) shows a compositional bias: low complexity. The next 4 membrane-spanning stretches (helical) occupy residues 350–370 (FVGN…GIMY), 424–444 (FPLI…MGSI), 458–478 (LSAQ…MFFI), and 499–519 (PVIF…YYIV).

Belongs to the OXA1/ALB3/YidC family. Type 1 subfamily. Interacts with the Sec translocase complex via SecD. Specifically interacts with transmembrane segments of nascent integral membrane proteins during membrane integration.

Its subcellular location is the cell inner membrane. Its function is as follows. Required for the insertion and/or proper folding and/or complex formation of integral membrane proteins into the membrane. Involved in integration of membrane proteins that insert both dependently and independently of the Sec translocase complex, as well as at least some lipoproteins. Aids folding of multispanning membrane proteins. The protein is Membrane protein insertase YidC of Salmonella typhimurium (strain LT2 / SGSC1412 / ATCC 700720).